We begin with the raw amino-acid sequence, 169 residues long: Cytochrome c oxidase subunit 4 isoform 1, mitochondrial (169 aa).

The N-terminal 22 residues, 1–22 (MLASRALSLIGKRAISTSVCLR), are a transit peptide targeting the mitochondrion. Over 23-99 (AHGSVVKSED…FAEMNRGTNE (77 aa)) the chain is Mitochondrial matrix. At Lys29 the chain carries N6-acetyllysine; alternate. At Lys29 the chain carries N6-succinyllysine; alternate. Residues Ser56 and Ser58 each carry the phosphoserine modification. Position 60 is an N6-acetyllysine; alternate (Lys60). Position 60 is an N6-succinyllysine; alternate (Lys60). Residue Lys67 is modified to N6-acetyllysine. Residues 100-125 (WKTVVGMAMFFIGFTALVLIWEKSYV) form a helical membrane-spanning segment. The Mitochondrial intermembrane segment spans residues 126–169 (YGPIPHTFDRDWVAMQTKRMLDMKANPIQGFSAKWDYDKNEWKK).

Belongs to the cytochrome c oxidase IV family. In terms of assembly, component of the cytochrome c oxidase (complex IV, CIV), a multisubunit enzyme composed of 14 subunits. The complex is composed of a catalytic core of 3 subunits MT-CO1, MT-CO2 and MT-CO3, encoded in the mitochondrial DNA, and 11 supernumerary subunits COX4I, COX5A, COX5B, COX6A, COX6B, COX6C, COX7A, COX7B, COX7C, COX8 and NDUFA4, which are encoded in the nuclear genome. The complex exists as a monomer or a dimer and forms supercomplexes (SCs) in the inner mitochondrial membrane with NADH-ubiquinone oxidoreductase (complex I, CI) and ubiquinol-cytochrome c oxidoreductase (cytochrome b-c1 complex, complex III, CIII), resulting in different assemblies (supercomplex SCI(1)III(2)IV(1) and megacomplex MCI(2)III(2)IV(2)). Interacts with PHB2; the interaction decreases in absence of SPHK2. Interacts with AFG1L. Interacts with ABCB7; this interaction allows the regulation of cellular iron homeostasis and cellular reactive oxygen species (ROS) levels in cardiomyocytes. Interacts with FLVCR2; this interaction occurs in the absence of heme and is disrupted upon heme binding. Interacts with IRGC.

It localises to the mitochondrion inner membrane. It functions in the pathway energy metabolism; oxidative phosphorylation. Functionally, component of the cytochrome c oxidase, the last enzyme in the mitochondrial electron transport chain which drives oxidative phosphorylation. The respiratory chain contains 3 multisubunit complexes succinate dehydrogenase (complex II, CII), ubiquinol-cytochrome c oxidoreductase (cytochrome b-c1 complex, complex III, CIII) and cytochrome c oxidase (complex IV, CIV), that cooperate to transfer electrons derived from NADH and succinate to molecular oxygen, creating an electrochemical gradient over the inner membrane that drives transmembrane transport and the ATP synthase. Cytochrome c oxidase is the component of the respiratory chain that catalyzes the reduction of oxygen to water. Electrons originating from reduced cytochrome c in the intermembrane space (IMS) are transferred via the dinuclear copper A center (CU(A)) of subunit 2 and heme A of subunit 1 to the active site in subunit 1, a binuclear center (BNC) formed by heme A3 and copper B (CU(B)). The BNC reduces molecular oxygen to 2 water molecules using 4 electrons from cytochrome c in the IMS and 4 protons from the mitochondrial matrix. The chain is Cytochrome c oxidase subunit 4 isoform 1, mitochondrial (Cox4i1) from Mus musculus (Mouse).